The primary structure comprises 286 residues: 4-hydroxy-tetrahydrodipicolinate synthase (286 aa).

Position 42 (threonine 42) interacts with pyruvate. Tyrosine 129 (proton donor/acceptor) is an active-site residue. Residue lysine 157 is the Schiff-base intermediate with substrate of the active site. Isoleucine 196 serves as a coordination point for pyruvate.

It belongs to the DapA family. In terms of assembly, homotetramer; dimer of dimers.

The protein resides in the cytoplasm. It carries out the reaction L-aspartate 4-semialdehyde + pyruvate = (2S,4S)-4-hydroxy-2,3,4,5-tetrahydrodipicolinate + H2O + H(+). Its pathway is amino-acid biosynthesis; L-lysine biosynthesis via DAP pathway; (S)-tetrahydrodipicolinate from L-aspartate: step 3/4. In terms of biological role, catalyzes the condensation of (S)-aspartate-beta-semialdehyde [(S)-ASA] and pyruvate to 4-hydroxy-tetrahydrodipicolinate (HTPA). This Chlamydia trachomatis serovar A (strain ATCC VR-571B / DSM 19440 / HAR-13) protein is 4-hydroxy-tetrahydrodipicolinate synthase.